Consider the following 287-residue polypeptide: Alpha-tubulin N-acetyltransferase 2 (287 aa).

In terms of domain architecture, N-acetyltransferase spans valine 2 to phenylalanine 193. Acetyl-CoA-binding positions include phenylalanine 127–lysine 140 and serine 163–lysine 172.

It belongs to the acetyltransferase ATAT1 family.

Its subcellular location is the midbody. It localises to the midbody ring. It carries out the reaction L-lysyl-[alpha-tubulin] + acetyl-CoA = N(6)-acetyl-L-lysyl-[alpha-tubulin] + CoA + H(+). Functionally, specifically acetylates 'Lys-40' in alpha-tubulin on the lumenal side of microtubules. Promotes microtubule destabilization and accelerates microtubule dynamics; this activity may be independent of acetylation activity. Acetylates alpha-tubulin with a slow enzymatic rate, due to a catalytic site that is not optimized for acetyl transfer. Enters the microtubule through each end and diffuses quickly throughout the lumen of microtubules. Acetylates only long/old microtubules because of its slow acetylation rate since it does not have time to act on dynamically unstable microtubules before the enzyme is released. Main acetyltransferase responsible for alpha-tubulin 'Lys-40' acetylation in germline cells during the early stages of oogenesis. Required for normal egg chamber separation. This is Alpha-tubulin N-acetyltransferase 2 from Drosophila melanogaster (Fruit fly).